The sequence spans 235 residues: Putative quercetin 2,3-dioxygenase ZMO1337 (235 aa).

A divalent metal cation is bound by residues histidine 57, histidine 59, histidine 101, and glutamate 103.

This sequence belongs to the pirin family. A divalent metal cation serves as cofactor.

The enzyme catalyses quercetin + O2 = 2-(3,4-dihydroxybenzoyloxy)-4,6-dihydroxybenzoate + CO. The protein operates within flavonoid metabolism; quercetin degradation. Functionally, putative quercetin 2,3-dioxygenase. The polypeptide is Putative quercetin 2,3-dioxygenase ZMO1337 (Zymomonas mobilis subsp. mobilis (strain ATCC 31821 / ZM4 / CP4)).